A 234-amino-acid chain; its full sequence is Small ribosomal subunit protein uS2 (234 aa).

This sequence belongs to the universal ribosomal protein uS2 family.

In Clostridium kluyveri (strain NBRC 12016), this protein is Small ribosomal subunit protein uS2.